Here is a 612-residue protein sequence, read N- to C-terminus: UvrABC system protein C (612 aa).

Residues 20 to 98 (THSGVYRMLD…IKQHRPKYNI (79 aa)) form the GIY-YIG domain. The UVR domain occupies 208–243 (SSVLEEISANMYQASEDMEYEKAQVYRDQLVVLRKL).

This sequence belongs to the UvrC family. In terms of assembly, interacts with UvrB in an incision complex.

Its subcellular location is the cytoplasm. Its function is as follows. The UvrABC repair system catalyzes the recognition and processing of DNA lesions. UvrC both incises the 5' and 3' sides of the lesion. The N-terminal half is responsible for the 3' incision and the C-terminal half is responsible for the 5' incision. In Francisella tularensis subsp. holarctica (strain LVS), this protein is UvrABC system protein C.